Consider the following 116-residue polypeptide: Protein Rev (116 aa).

Ser-5 is subject to Phosphoserine; by host CK2. Residues 18–26 (YIKILYQSN) are homomultimerization. The short motif at 34–50 (TRKARRNRRRRWRARQR) is the Nuclear localization signal and RNA-binding (RRE) element. A Nuclear export signal and binding to XPO1 motif is present at residues 73–84 (LQLPLLEKLHIN). The disordered stretch occupies residues 90 to 116 (GQGTEKGVGSPQISVESRAVLGSGTKE). Residue Ser-99 is modified to Phosphoserine; by host.

This sequence belongs to the HIV-1 REV protein family. In terms of assembly, homomultimer; when bound to the RRE. Multimeric assembly is essential for activity and may involve XPO1. Binds to human KPNB1, XPO1, TNPO1, RANBP5 and IPO7. Interacts with the viral Integrase. Interacts with human KHDRBS1. Interacts with human NAP1; this interaction decreases Rev multimerization and stimulates its activity. Interacts with human DEAD-box helicases DDX3 and DDX24; these interactions may serve for viral RNA export to the cytoplasm and packaging, respectively. Interacts with human PSIP1; this interaction may inhibit HIV-1 DNA integration by promoting dissociation of the Integrase-LEDGF/p75 complex. Asymmetrically arginine dimethylated at one site by host PRMT6. Methylation impairs the RNA-binding activity and export of viral RNA from the nucleus to the cytoplasm. In terms of processing, phosphorylated by protein kinase CK2. Presence of, and maybe binding to the N-terminus of the regulatory beta subunit of CK2 is necessary for CK2-mediated Rev's phosphorylation.

The protein resides in the host nucleus. It is found in the host nucleolus. It localises to the host cytoplasm. Escorts unspliced or incompletely spliced viral pre-mRNAs (late transcripts) out of the nucleus of infected cells. These pre-mRNAs carry a recognition sequence called Rev responsive element (RRE) located in the env gene, that is not present in fully spliced viral mRNAs (early transcripts). This function is essential since most viral proteins are translated from unspliced or partially spliced pre-mRNAs which cannot exit the nucleus by the pathway used by fully processed cellular mRNAs. Rev itself is translated from a fully spliced mRNA that readily exits the nucleus. Rev's nuclear localization signal (NLS) binds directly to KPNB1/Importin beta-1 without previous binding to KPNA1/Importin alpha-1. KPNB1 binds to the GDP bound form of RAN (Ran-GDP) and targets Rev to the nucleus. In the nucleus, the conversion from Ran-GDP to Ran-GTP dissociates Rev from KPNB1 and allows Rev's binding to the RRE in viral pre-mRNAs. Rev multimerization on the RRE via cooperative assembly exposes its nuclear export signal (NES) to the surface. Rev can then form a complex with XPO1/CRM1 and Ran-GTP, leading to nuclear export of the complex. Conversion from Ran-GTP to Ran-GDP mediates dissociation of the Rev/RRE/XPO1/RAN complex, so that Rev can return to the nucleus for a subsequent round of export. Beside KPNB1, also seems to interact with TNPO1/Transportin-1, RANBP5/IPO5 and IPO7/RANBP7 for nuclear import. The nucleoporin-like HRB/RIP is an essential cofactor that probably indirectly interacts with Rev to release HIV RNAs from the perinuclear region to the cytoplasm. The chain is Protein Rev from Human immunodeficiency virus type 1 group M subtype F2 (isolate MP257) (HIV-1).